A 196-amino-acid chain; its full sequence is Transcription repressor OFP10 (196 aa).

An OVATE domain is found at 100-159 (MAKESINPFEDYKKSMNQMIEERYIETESELKELLRCFLDINPSPQHNLIVRAFVDVCSH).

Expressed in roots, cauline leaves, shoots, stems, flower buds and siliques.

The protein localises to the nucleus. Transcriptional repressor that may regulate multiple aspects of plant growth and development through the regulation of BEL1-LIKE (BLH) and KNOX TALE (KNAT) homeodomain transcription factors. This Arabidopsis thaliana (Mouse-ear cress) protein is Transcription repressor OFP10 (OFP10).